The chain runs to 78 residues: Large ribosomal subunit protein bL28 (78 aa).

Positions 1–20 (MSRVCQLTGTRANNGMSVSH) are enriched in polar residues. The segment at 1–23 (MSRVCQLTGTRANNGMSVSHSHI) is disordered.

This sequence belongs to the bacterial ribosomal protein bL28 family.

In Prochlorococcus marinus (strain NATL2A), this protein is Large ribosomal subunit protein bL28.